Here is a 352-residue protein sequence, read N- to C-terminus: MSVPDRKRALEAAIAYIEKQFGAGSIMSLGKHSSAHEISTIKTGALSLDLALGIGGVPKGRIVEIFGPESSGKTTLATHIVANAQKMGGVAAYIDAEHALDPNYAALIGANINDLMISQPDCGEDALSIAELLARSGAVDVIVIDSVAALVPKSELEGEIGDVHVGLQARMMSQALRKLTATLARTNTCAIFINQIREKIGVSFGNPETTTGGRALKFYSSIRIDIRRIGSIKGGENFDIGNRIKVKVAKNKLAPPFRTAEFDILFNEGISSAGCIIDLAVEKNIIDKKGSWFNYQDRKLGQGREAVREELKRNKELFHELERRIYESVQASQVPAAACVDAESREVAEAAK.

67–74 lines the ATP pocket; the sequence is GPESSGKT.

The protein belongs to the RecA family.

It is found in the cytoplasm. Its function is as follows. Can catalyze the hydrolysis of ATP in the presence of single-stranded DNA, the ATP-dependent uptake of single-stranded DNA by duplex DNA, and the ATP-dependent hybridization of homologous single-stranded DNAs. It interacts with LexA causing its activation and leading to its autocatalytic cleavage. This is Protein RecA from Chlamydia trachomatis serovar D (strain ATCC VR-885 / DSM 19411 / UW-3/Cx).